The following is a 464-amino-acid chain: MNVFGITELKNPVKEKIEFKEPFELFKSIYSEYDSSFLLESMESDTGLARYSFMGFEPQMIIRARSGFIEVEYEGSREEFDTENPFEFLRQFTRPAGKSRGFCGGLVGYISYQAARFFDSINLSPGNFPDFEFGLFLDGIMFNHLTGECSYISLKENRLPEISELLREETPTGHLKYRSMGTLFSRRRYLGMVEEARERIAEGEIFQAVLSNATDYRLRGDRLALYEALRRVNPSPYMYHLKLGSREITGSSPEMLVRVEDKQIETFPIAGTRPRGKTPHEDERIAAELLSDEKELAEHLMLVDLARNDLGRISEFGTVQVPEYMTIRRFSHVQHILSHVTGRLRKGMDALDALGAVFPAGTVSGAPKIRAMEIIESLEGVPRNAYAGALGYLSLNGNADFAITIRSMVAEGAYGRIQAGAGIVHDSVPEREYVECQNKAMAVLKSMELAGDGFDSDEPFIARR.

L-tryptophan contacts are provided by residues serine 41 and 236-238 (PYM). Position 271 to 272 (271 to 272 (GT)) interacts with chorismate. Glutamate 298 provides a ligand contact to Mg(2+). Residues tyrosine 386, arginine 406, 420–422 (GAG), and glycine 422 contribute to the chorismate site. Glutamate 435 is a binding site for Mg(2+).

Belongs to the anthranilate synthase component I family. As to quaternary structure, heterotetramer consisting of two non-identical subunits: a beta subunit (TrpG) and a large alpha subunit (TrpE). Requires Mg(2+) as cofactor.

The catalysed reaction is chorismate + L-glutamine = anthranilate + pyruvate + L-glutamate + H(+). The protein operates within amino-acid biosynthesis; L-tryptophan biosynthesis; L-tryptophan from chorismate: step 1/5. Feedback inhibited by tryptophan. Functionally, part of a heterotetrameric complex that catalyzes the two-step biosynthesis of anthranilate, an intermediate in the biosynthesis of L-tryptophan. In the first step, the glutamine-binding beta subunit (TrpG) of anthranilate synthase (AS) provides the glutamine amidotransferase activity which generates ammonia as a substrate that, along with chorismate, is used in the second step, catalyzed by the large alpha subunit of AS (TrpE) to produce anthranilate. In the absence of TrpG, TrpE can synthesize anthranilate directly from chorismate and high concentrations of ammonia. The chain is Anthranilate synthase component 1 (trpE) from Methanothermobacter thermautotrophicus (strain ATCC 29096 / DSM 1053 / JCM 10044 / NBRC 100330 / Delta H) (Methanobacterium thermoautotrophicum).